The sequence spans 753 residues: Transcription factor SOX-30 (753 aa).

Disordered regions lie at residues 1–45 (MERA…TLSA) and 137–161 (AKKQKLGPSLDQSVGPRGAVETGPR). Over residues 7–23 (EPPPQPRPLRPAPPPLP) the composition is skewed to pro residues. A DNA-binding region (HMG box) is located at residues 337 to 405 (VKRPMNAFMV…KHREEFPGWV (69 aa)). Disordered stretches follow at residues 514-575 (TGPS…SPCP) and 726-753 (PTSTPSSIQQVNVTDSDEEEEEKVLRDL). Polar residues-rich tracts occupy residues 531-563 (TVKQPTPVSLESANRISSSASTAHARFATSTIQ) and 726-739 (PTSTPSSIQQVNVT).

Interacts with CTNNB1, competitively inhibiting CTNNB1-TCF7L2/TCF4 interaction.

It localises to the nucleus. It is found in the cytoplasm. Acts both as a transcriptional activator and a repressor. Binds to the DNA sequence 5'-ACAAT-3' and shows a preference for guanine residues surrounding this core motif. Binds to its own promoter and activates its own transcription. Required to activate the expression of postmeiotic genes involved in spermiogenesis. Binds to the promoter region of CTNNB1 and represses its transcription which leads to inhibition of Wnt signaling. Also inhibits Wnt signaling by binding to the CTNNB1 protein, preventing interaction of CTNNB1 with TCF7L2/TCF4. This is Transcription factor SOX-30 (SOX30) from Homo sapiens (Human).